Consider the following 26-residue polypeptide: Dermaseptin-J2 (26 aa).

Residue Val-26 is modified to Valine amide.

In terms of tissue distribution, expressed by the skin glands.

It is found in the secreted. Its function is as follows. Has antimicrobial activity. This Phasmahyla jandaia (Jandaia leaf frog) protein is Dermaseptin-J2.